A 120-amino-acid polypeptide reads, in one-letter code: Putative 15 kDa capsid protein (120 aa).

It is found in the virion. This chain is Putative 15 kDa capsid protein (P15), found in Orgyia pseudotsugata (Douglas-fir tussock moth).